Here is a 380-residue protein sequence, read N- to C-terminus: Erythronate-4-phosphate dehydrogenase (380 aa).

Positions 45 and 66 each coordinate substrate. Residues aspartate 146, threonine 174, 205–207 (ASR), and aspartate 231 each bind NAD(+). Arginine 207 is an active-site residue. Glutamate 236 is an active-site residue. The Proton donor role is filled by histidine 253. An NAD(+)-binding site is contributed by glycine 256. Tyrosine 257 is a binding site for substrate.

The protein belongs to the D-isomer specific 2-hydroxyacid dehydrogenase family. PdxB subfamily. In terms of assembly, homodimer.

The protein resides in the cytoplasm. The enzyme catalyses 4-phospho-D-erythronate + NAD(+) = (R)-3-hydroxy-2-oxo-4-phosphooxybutanoate + NADH + H(+). It participates in cofactor biosynthesis; pyridoxine 5'-phosphate biosynthesis; pyridoxine 5'-phosphate from D-erythrose 4-phosphate: step 2/5. In terms of biological role, catalyzes the oxidation of erythronate-4-phosphate to 3-hydroxy-2-oxo-4-phosphonooxybutanoate. This chain is Erythronate-4-phosphate dehydrogenase, found in Pseudomonas putida (strain W619).